Consider the following 150-residue polypeptide: 1,4-dihydroxy-2-naphthoyl-CoA hydrolase (150 aa).

Residue D19 is part of the active site.

Belongs to the 4-hydroxybenzoyl-CoA thioesterase family. DHNA-CoA hydrolase subfamily.

The enzyme catalyses 1,4-dihydroxy-2-naphthoyl-CoA + H2O = 1,4-dihydroxy-2-naphthoate + CoA + H(+). It functions in the pathway cofactor biosynthesis; phylloquinone biosynthesis. It participates in quinol/quinone metabolism; 1,4-dihydroxy-2-naphthoate biosynthesis; 1,4-dihydroxy-2-naphthoate from chorismate: step 7/7. Functionally, catalyzes the hydrolysis of 1,4-dihydroxy-2-naphthoyl-CoA (DHNA-CoA) to 1,4-dihydroxy-2-naphthoate (DHNA), a reaction involved in phylloquinone (vitamin K1) biosynthesis. The chain is 1,4-dihydroxy-2-naphthoyl-CoA hydrolase from Prochlorococcus marinus subsp. pastoris (strain CCMP1986 / NIES-2087 / MED4).